The primary structure comprises 447 residues: Phosphoglucosamine mutase (447 aa).

Catalysis depends on serine 88, which acts as the Phosphoserine intermediate. Serine 88, aspartate 231, aspartate 233, and aspartate 235 together coordinate Mg(2+). Serine 88 carries the phosphoserine modification.

Belongs to the phosphohexose mutase family. Requires Mg(2+) as cofactor. In terms of processing, activated by phosphorylation.

The catalysed reaction is alpha-D-glucosamine 1-phosphate = D-glucosamine 6-phosphate. Functionally, catalyzes the conversion of glucosamine-6-phosphate to glucosamine-1-phosphate. This is Phosphoglucosamine mutase from Methanococcus maripaludis (strain C7 / ATCC BAA-1331).